Reading from the N-terminus, the 385-residue chain is Cytochrome b (385 aa).

At 1–27 (MRLLKSHPLLKLVNSYLIDASQPSNIS) the chain is on the mitochondrial matrix side. Tyrosine 16 is an a ubiquinone binding site. A helical transmembrane segment spans residues 28–51 (YLWNFGSLLACCLIIQIVTGVTLA). Topologically, residues 52-74 (MHYSPNVLEAFNSIEHIMRDVNN) are mitochondrial intermembrane. The helical transmembrane segment at 75–102 (GWLVRYLHSNTASAFFFLVYLHIGRGMY) threads the bilayer. 2 residues coordinate heme b: histidine 82 and histidine 96. The Mitochondrial matrix portion of the chain corresponds to 103–110 (YGSYRAPR). The helical transmembrane segment at 111–135 (TLVWAIGTVILILMMATAFLGYVLP) threads the bilayer. The Mitochondrial intermembrane segment spans residues 136–172 (YGQMSLWGATVITNLISAIPWIGQDIVEFIWGGFSVN). A helical membrane pass occupies residues 173-205 (NATLNRFFALHFVLPFILAALVLMHLIALHDTA). The heme b site is built by histidine 183 and histidine 197. A ubiquinone is bound at residue histidine 202. Over 206 to 224 (GSSNPLGVSGNYDRITFAP) the chain is Mitochondrial matrix. A helical membrane pass occupies residues 225-247 (YYLFKDLITIFIFIYVLSSFVFF). Topologically, residues 248–288 (MPNVLGDSENYIMANPMQTPPAIVPEWYLLPFYAILRSIPN) are mitochondrial intermembrane. Residues 289 to 309 (KLLGVIAMFSAILAIMLLPIT) traverse the membrane as a helical segment. At 310–320 (DLGRSKGLQFR) the chain is on the mitochondrial matrix side. The chain crosses the membrane as a helical span at residues 321–341 (PLSKFAFWAFVVNFLILMKLG). Over 342–348 (ACHVESP) the chain is Mitochondrial intermembrane. A helical membrane pass occupies residues 349–365 (FIELGQFSTIFYFSYFI). Topologically, residues 366-385 (FIVPVLSLIENTLVDLNYLK) are mitochondrial matrix.

The protein belongs to the cytochrome b family. Component of the ubiquinol-cytochrome c oxidoreductase (cytochrome b-c1 complex, complex III, CIII), a multisubunit enzyme composed of 10 subunits. The complex is composed of 3 respiratory subunits cytochrome b (cob), cytochrome c1 (cyt-1) and Rieske protein (fes-1), 2 core protein subunits pep and ucr-1, and 5 low-molecular weight protein subunits qcr6, qcr7, qcr8, qcr9 and probably NCU16844/qcr10. The complex exists as an obligatory dimer and forms supercomplexes (SCs) in the inner mitochondrial membrane with NADH-ubiquinone oxidoreductase (complex I, CI) and cytochrome c oxidase (complex IV, CIV), resulting in different assemblies (supercomplexes SCI(1)III(2), SCIII(2)IV(1) and SCIII(2)IV(2) as well as higher order I(x)III(y)IV(z) megacomplexes). Heme b serves as cofactor.

The protein localises to the mitochondrion inner membrane. The catalysed reaction is a quinol + 2 Fe(III)-[cytochrome c](out) = a quinone + 2 Fe(II)-[cytochrome c](out) + 2 H(+)(out). Functionally, component of the ubiquinol-cytochrome c oxidoreductase, a multisubunit transmembrane complex that is part of the mitochondrial electron transport chain which drives oxidative phosphorylation. The respiratory chain contains 3 multisubunit complexes succinate dehydrogenase (complex II, CII), ubiquinol-cytochrome c oxidoreductase (cytochrome b-c1 complex, complex III, CIII) and cytochrome c oxidase (complex IV, CIV), that cooperate to transfer electrons derived from NADH and succinate to molecular oxygen, creating an electrochemical gradient over the inner membrane that drives transmembrane transport and the ATP synthase. The cytochrome b-c1 complex catalyzes electron transfer from ubiquinol to cytochrome c, linking this redox reaction to translocation of protons across the mitochondrial inner membrane, with protons being carried across the membrane as hydrogens on the quinol. In the process called Q cycle, 2 protons are consumed from the matrix, 4 protons are released into the intermembrane space and 2 electrons are passed to cytochrome c. Cytochrome b is a catalytic core subunit containing 2 b-type hemes BL and BH topographically segregated in the quinone reduction (Qi) and quinol oxidation (Q0) sites on opposite sides of the membrane. This Neurospora crassa (strain ATCC 24698 / 74-OR23-1A / CBS 708.71 / DSM 1257 / FGSC 987) protein is Cytochrome b (cob).